We begin with the raw amino-acid sequence, 414 residues long: Autophagy-related protein 18 (414 aa).

WD repeat units follow at residues 1-36 (MAMNFVTFNQDYSYLAVATSKGFRIFTTDPFAKSYE), 69-114 (KRQS…LLYT), 185-225 (AHRS…KLYQ), and 230-269 (SIPSRIYSMSFNTTSTLLCVSSSTETIHLFKLSHQTSSRE). Positions 226–230 (FRRGS) match the L/FRRG motif motif. The tract at residues 261-314 (LSHQTSSREGSPSSALSRERAASQSSLGTSPDPDDPTDDMESSEIASRKHNGTL) is disordered. Residues 262-289 (SHQTSSREGSPSSALSRERAASQSSLGT) show a composition bias toward polar residues. Over residues 292–302 (DPDDPTDDMES) the composition is skewed to acidic residues. WD repeat units follow at residues 309-355 (KHNG…AWIK) and 367-407 (GNAG…GGEG).

This sequence belongs to the WD repeat PROPPIN family. In terms of assembly, component of the PI(3,5)P2 regulatory complex.

Its subcellular location is the preautophagosomal structure membrane. It localises to the vacuole membrane. The protein resides in the endosome membrane. Its function is as follows. The PI(3,5)P2 regulatory complex regulates both the synthesis and turnover of phosphatidylinositol 3,5-bisphosphate (PtdIns(3,5)P2). Necessary for proper vacuole morphology. Plays an important role in osmotically-induced vacuole fragmentation. Required for cytoplasm to vacuole transport (Cvt) vesicle formation, pexophagy and starvation-induced autophagy. Involved in correct atg9 trafficking to the pre-autophagosomal structure. Might also be involved in premeiotic DNA replication. This chain is Autophagy-related protein 18 (atg18), found in Aspergillus terreus (strain NIH 2624 / FGSC A1156).